The primary structure comprises 415 residues: Serine hydroxymethyltransferase (415 aa).

Residues Leu120 and 124 to 126 (GHL) each bind (6S)-5,6,7,8-tetrahydrofolate. Lys229 is subject to N6-(pyridoxal phosphate)lysine.

The protein belongs to the SHMT family. In terms of assembly, homodimer. It depends on pyridoxal 5'-phosphate as a cofactor.

The protein localises to the cytoplasm. The enzyme catalyses (6R)-5,10-methylene-5,6,7,8-tetrahydrofolate + glycine + H2O = (6S)-5,6,7,8-tetrahydrofolate + L-serine. It participates in one-carbon metabolism; tetrahydrofolate interconversion. It functions in the pathway amino-acid biosynthesis; glycine biosynthesis; glycine from L-serine: step 1/1. Its function is as follows. Catalyzes the reversible interconversion of serine and glycine with tetrahydrofolate (THF) serving as the one-carbon carrier. This reaction serves as the major source of one-carbon groups required for the biosynthesis of purines, thymidylate, methionine, and other important biomolecules. Also exhibits THF-independent aldolase activity toward beta-hydroxyamino acids, producing glycine and aldehydes, via a retro-aldol mechanism. This is Serine hydroxymethyltransferase from Desulforudis audaxviator (strain MP104C).